Here is a 549-residue protein sequence, read N- to C-terminus: Glucose-6-phosphate isomerase (549 aa).

The active-site Proton donor is the Glu352. Active-site residues include His383 and Lys511.

The protein belongs to the GPI family.

The protein localises to the cytoplasm. The enzyme catalyses alpha-D-glucose 6-phosphate = beta-D-fructose 6-phosphate. It participates in carbohydrate biosynthesis; gluconeogenesis. The protein operates within carbohydrate degradation; glycolysis; D-glyceraldehyde 3-phosphate and glycerone phosphate from D-glucose: step 2/4. In terms of biological role, catalyzes the reversible isomerization of glucose-6-phosphate to fructose-6-phosphate. This is Glucose-6-phosphate isomerase from Methylocella silvestris (strain DSM 15510 / CIP 108128 / LMG 27833 / NCIMB 13906 / BL2).